The following is a 106-amino-acid chain: Nucleoid-associated protein Fjoh_2555 (106 aa).

This sequence belongs to the YbaB/EbfC family. Homodimer.

The protein localises to the cytoplasm. The protein resides in the nucleoid. Binds to DNA and alters its conformation. May be involved in regulation of gene expression, nucleoid organization and DNA protection. The polypeptide is Nucleoid-associated protein Fjoh_2555 (Flavobacterium johnsoniae (strain ATCC 17061 / DSM 2064 / JCM 8514 / BCRC 14874 / CCUG 350202 / NBRC 14942 / NCIMB 11054 / UW101) (Cytophaga johnsonae)).